The following is a 122-amino-acid chain: Ribosome-binding factor A (122 aa).

Belongs to the RbfA family. In terms of assembly, monomer. Binds 30S ribosomal subunits, but not 50S ribosomal subunits or 70S ribosomes.

It is found in the cytoplasm. In terms of biological role, one of several proteins that assist in the late maturation steps of the functional core of the 30S ribosomal subunit. Associates with free 30S ribosomal subunits (but not with 30S subunits that are part of 70S ribosomes or polysomes). Required for efficient processing of 16S rRNA. May interact with the 5'-terminal helix region of 16S rRNA. This Polaromonas naphthalenivorans (strain CJ2) protein is Ribosome-binding factor A.